The primary structure comprises 451 residues: Chromosomal replication initiator protein DnaA (451 aa).

The interval 1-72 (MQSIEDIWQE…ANILQEITGR (72 aa)) is domain I, interacts with DnaA modulators. Residues 72 to 108 (RLFDVRFIDGEQEENFEYTVIKPNPALDEDGIEIGKH) form a domain II region. The tract at residues 109–325 (MLNPRYVFDT…GALIRVVAYS (217 aa)) is domain III, AAA+ region. G153, G155, K156, and T157 together coordinate ATP. The domain IV, binds dsDNA stretch occupies residues 326–451 (SLVNKDITAG…KNLRKSQNMF (126 aa)).

Belongs to the DnaA family. In terms of assembly, oligomerizes as a right-handed, spiral filament on DNA at oriC.

It localises to the cytoplasm. Functionally, plays an essential role in the initiation and regulation of chromosomal replication. ATP-DnaA binds to the origin of replication (oriC) to initiate formation of the DNA replication initiation complex once per cell cycle. Binds the DnaA box (a 9 base pair repeat at the origin) and separates the double-stranded (ds)DNA. Forms a right-handed helical filament on oriC DNA; dsDNA binds to the exterior of the filament while single-stranded (ss)DNA is stabiized in the filament's interior. The ATP-DnaA-oriC complex binds and stabilizes one strand of the AT-rich DNA unwinding element (DUE), permitting loading of DNA polymerase. After initiation quickly degrades to an ADP-DnaA complex that is not apt for DNA replication. Binds acidic phospholipids. This is Chromosomal replication initiator protein DnaA from Listeria welshimeri serovar 6b (strain ATCC 35897 / DSM 20650 / CCUG 15529 / CIP 8149 / NCTC 11857 / SLCC 5334 / V8).